A 175-amino-acid polypeptide reads, in one-letter code: MAVQPEVILGDITTLEVDVIVNAANPSLLGGGGVDGAIHRAAGPALLAACKQVLQQQGECPPGHAVITIAGDLPASAVIHTVGPVWHGGDRMEAQTLADAYKNSLQLAAANNYRSIAFPAISTGVYGYPKEEAAEIAVRTVTAFLTRYNPLERVLFVCFDEETAAIYRRLLASYP.

The Macro domain occupies 1–175 (MAVQPEVILG…IYRRLLASYP (175 aa)). Substrate is bound by residues 11-12 (DI), asparagine 25, 33-35 (GVD), and 122-126 (STGVY). The active-site Proton acceptor is the aspartate 35.

Belongs to the MacroD-type family. YmdB subfamily. As to quaternary structure, homodimer. Interacts with RNase III.

The catalysed reaction is 3''-O-acetyl-ADP-D-ribose + H2O = ADP-D-ribose + acetate + H(+). It carries out the reaction 2''-O-acetyl-ADP-D-ribose + H2O = ADP-D-ribose + acetate + H(+). Deacetylates O-acetyl-ADP ribose to yield ADP-ribose and free acetate. Down-regulates ribonuclease 3 (RNase III) activity. Acts by interacting directly with the region of the ribonuclease that is required for dimerization/activation. The sequence is that of O-acetyl-ADP-ribose deacetylase from Klebsiella pneumoniae (strain 342).